Here is a 167-residue protein sequence, read N- to C-terminus: UPF0178 protein bll3966 (167 aa).

It belongs to the UPF0178 family.

In Bradyrhizobium diazoefficiens (strain JCM 10833 / BCRC 13528 / IAM 13628 / NBRC 14792 / USDA 110), this protein is UPF0178 protein bll3966.